We begin with the raw amino-acid sequence, 214 residues long: Vascular endothelial growth factor A (214 aa).

The signal sequence occupies residues 1-26 (MNFLLSWVHWSLALLLYLHHAKWSQA). Intrachain disulfides connect Cys-51–Cys-93, Cys-82–Cys-127, and Cys-86–Cys-129. N-linked (GlcNAc...) asparagine glycosylation occurs at Asn-100. The span at 131-142 (PKKDRARQEKKS) shows a compositional bias: basic and acidic residues. Residues 131 to 162 (PKKDRARQEKKSIRGKGKGQKRKRKKSRYKPW) form a disordered region. A compositionally biased stretch (basic residues) spans 143–159 (IRGKGKGQKRKRKKSRY).

Belongs to the PDGF/VEGF growth factor family. As to quaternary structure, homodimer; disulfide-linked. Also found as heterodimer with PGF. Interacts with NRP1. Interacts with BSG. Interacts with CD82; this interaction inhibits VEGFA-mediated signaling pathway.

It is found in the secreted. Its function is as follows. Growth factor active in angiogenesis, vasculogenesis and endothelial cell growth. Induces endothelial cell proliferation, promotes cell migration, inhibits apoptosis and induces permeabilization of blood vessels. Binds to the FLT1/VEGFR1 and KDR/VEGFR2 receptors, heparan sulfate and heparin. Binding to NRP1 receptor initiates a signaling pathway needed for motor neuron axon guidance and cell body migration, including for the caudal migration of facial motor neurons from rhombomere 4 to rhombomere 6 during embryonic development. Also binds the DEAR/FBXW7-AS1 receptor. The chain is Vascular endothelial growth factor A (VEGFA) from Canis lupus familiaris (Dog).